The sequence spans 177 residues: Large ribosomal subunit protein uL6 (177 aa).

This sequence belongs to the universal ribosomal protein uL6 family. Part of the 50S ribosomal subunit.

In terms of biological role, this protein binds to the 23S rRNA, and is important in its secondary structure. It is located near the subunit interface in the base of the L7/L12 stalk, and near the tRNA binding site of the peptidyltransferase center. This is Large ribosomal subunit protein uL6 from Pseudomonas fluorescens (strain ATCC BAA-477 / NRRL B-23932 / Pf-5).